Consider the following 422-residue polypeptide: Metallocarboxypeptidase A-like protein TRV_02598 (422 aa).

An N-terminal signal peptide occupies residues 1–16 (MQSLLLLATLLGSALG). A propeptide spans 17–119 (GAIPSQSANY…ELLTLDGGAN (103 aa)) (activation peptide). Residues 125–421 (SYHKYEDHLK…AGVKAMFSKL (297 aa)) form the Peptidase M14 domain. His-185 and Glu-188 together coordinate Zn(2+). Substrate-binding positions include 185-188 (HARE), Arg-240, and 256-257 (NR). Cys-250 and Cys-273 are disulfide-bonded. His-311 is a Zn(2+) binding site. Position 312–313 (312–313 (SY)) interacts with substrate. The active-site Proton donor/acceptor is Glu-387.

It belongs to the peptidase M14 family. Zn(2+) serves as cofactor.

Its subcellular location is the secreted. Functionally, extracellular metalloprotease that contributes to pathogenicity. The chain is Metallocarboxypeptidase A-like protein TRV_02598 from Trichophyton verrucosum (strain HKI 0517).